Here is a 345-residue protein sequence, read N- to C-terminus: Phosphoribosylformylglycinamidine cyclo-ligase (345 aa).

The protein belongs to the AIR synthase family.

Its subcellular location is the cytoplasm. It carries out the reaction 2-formamido-N(1)-(5-O-phospho-beta-D-ribosyl)acetamidine + ATP = 5-amino-1-(5-phospho-beta-D-ribosyl)imidazole + ADP + phosphate + H(+). It functions in the pathway purine metabolism; IMP biosynthesis via de novo pathway; 5-amino-1-(5-phospho-D-ribosyl)imidazole from N(2)-formyl-N(1)-(5-phospho-D-ribosyl)glycinamide: step 2/2. In Shewanella baltica (strain OS223), this protein is Phosphoribosylformylglycinamidine cyclo-ligase.